The chain runs to 232 residues: uncharacterized protein (232 aa).

The protein localises to the cytoplasm. The protein resides in the nucleus. This is an uncharacterized protein from Saccharomyces cerevisiae (strain ATCC 204508 / S288c) (Baker's yeast).